A 296-amino-acid chain; its full sequence is Ribosomal RNA small subunit methyltransferase H (296 aa).

S-adenosyl-L-methionine-binding positions include 38–40 (GVH), E57, F88, D103, and H110.

Belongs to the methyltransferase superfamily. RsmH family.

It is found in the cytoplasm. The enzyme catalyses cytidine(1402) in 16S rRNA + S-adenosyl-L-methionine = N(4)-methylcytidine(1402) in 16S rRNA + S-adenosyl-L-homocysteine + H(+). Functionally, specifically methylates the N4 position of cytidine in position 1402 (C1402) of 16S rRNA. The sequence is that of Ribosomal RNA small subunit methyltransferase H from Borreliella burgdorferi (strain ZS7) (Borrelia burgdorferi).